A 66-amino-acid polypeptide reads, in one-letter code: Stress-induced protein KIN2 (66 aa).

Positions 1–10 (MSETNKNAFQ) are enriched in polar residues. A disordered region spans residues 1–20 (MSETNKNAFQAGQAAGKAEE). 2 repeats span residues 31-35 (DAAAA) and 49-53 (DAAVG).

In terms of assembly, interacts with DEK3. As to expression, expressed at high levels in embryos and mature seeds.

The chain is Stress-induced protein KIN2 from Arabidopsis thaliana (Mouse-ear cress).